Consider the following 155-residue polypeptide: MNMQKLRIELGEETNDELYDLLLLADPSKDIVDEYLERGECYTAWAGDELAGVYVLLKTRPQTVEIVNIAVKESLQKKGFGKQLVLDAIEKAKKLGADTIEIGTGNSSIHQLSLYQKCGFRIQAIDHDFFLRHYDEDIFENGIQCRDMVRLYLDL.

An N-acetyltransferase domain is found at 6–155; that stretch reads LRIELGEETN…RDMVRLYLDL (150 aa). Residues 69–71, 77–82, and 111–117 contribute to the CoA site; these read IAV, KKGFGK, and QLSLYQK.

In terms of biological role, probable N-acetyltransferase. This is an uncharacterized protein from Bacillus subtilis (strain 168).